The chain runs to 428 residues: Maltoporin (428 aa).

The first 24 residues, 1-24 (MKSMRILPISLTIMAGLLSIEASA), serve as a signal peptide directing secretion.

Belongs to the porin LamB (TC 1.B.3) family. In terms of assembly, homotrimer formed of three 18-stranded antiparallel beta-barrels, containing three independent channels.

The protein localises to the cell outer membrane. It carries out the reaction beta-maltose(in) = beta-maltose(out). Functionally, involved in the transport of maltose and maltodextrins. The protein is Maltoporin of Photorhabdus laumondii subsp. laumondii (strain DSM 15139 / CIP 105565 / TT01) (Photorhabdus luminescens subsp. laumondii).